The chain runs to 293 residues: Aminodeoxychorismate lyase (293 aa).

Position 146 is an N6-(pyridoxal phosphate)lysine (lysine 146).

This sequence belongs to the class-IV pyridoxal-phosphate-dependent aminotransferase family. Homodimer. Requires pyridoxal 5'-phosphate as cofactor.

It carries out the reaction 4-amino-4-deoxychorismate = 4-aminobenzoate + pyruvate + H(+). It functions in the pathway cofactor biosynthesis; tetrahydrofolate biosynthesis; 4-aminobenzoate from chorismate: step 2/2. Involved in the biosynthesis of p-aminobenzoate (PABA), a precursor of tetrahydrofolate. Converts 4-amino-4-deoxychorismate into 4-aminobenzoate (PABA) and pyruvate. The polypeptide is Aminodeoxychorismate lyase (Bacillus subtilis (strain 168)).